The following is a 542-amino-acid chain: MFS thioclapurine efflux transporter tcpA (542 aa).

Basic and acidic residues predominate over residues 1 to 10 (MATVGTEEKN). The tract at residues 1 to 24 (MATVGTEEKNPIGSASNTAEPNVT) is disordered. Over residues 13–24 (GSASNTAEPNVT) the composition is skewed to polar residues. N-linked (GlcNAc...) asparagine glycosylation is present at N22. Helical transmembrane passes span 32–52 (SGFK…LCGL), 75–97 (GWYT…KLYT), and 103–123 (MILL…AAAP). Residue N124 is glycosylated (N-linked (GlcNAc...) asparagine). Transmembrane regions (helical) follow at residues 133–153 (AIAG…LVHA), 161–181 (ALLG…PFIG), 193–213 (CFII…FFVF), 234–254 (IPEI…LQWG), 265–285 (IIAL…LQVL), and 307–327 (IFAL…PIYF). N332 carries an N-linked (GlcNAc...) asparagine glycan. A helical transmembrane segment spans residues 339-359 (GVNVMPLILGFLVMSIISGVI). A glycan (N-linked (GlcNAc...) asparagine) is linked at N361. Transmembrane regions (helical) follow at residues 370–390 (MFLC…FDVG), 396–416 (WIGY…QPIV), 427–447 (VPFG…IFVA), and 500–520 (VLGQ…LGSL).

The protein belongs to the major facilitator superfamily.

The protein localises to the cell membrane. In terms of biological role, MFS efflux transporter probably involved in thioclapurine export. In Claviceps purpurea (strain 20.1) (Ergot fungus), this protein is MFS thioclapurine efflux transporter tcpA.